Here is a 710-residue protein sequence, read N- to C-terminus: uncharacterized protein (710 aa).

The segment at 1–20 (MKQRQARLIGTPSQTRRQQE) is disordered. Residues 13 to 42 (SQTRRQQELAEKLEKVKEVLEDEKKRQFNE) are a coiled coil.

The protein belongs to the IIV-6 268L family.

This is an uncharacterized protein from Invertebrate iridescent virus 6 (IIV-6).